Reading from the N-terminus, the 600-residue chain is Aspartate--tRNA(Asp/Asn) ligase (600 aa).

Residue E187 participates in L-aspartate binding. An aspartate region spans residues 211 to 214 (QIFK). The L-aspartate site is built by R233 and H463. Residue 233–235 (RDE) coordinates ATP. ATP is bound at residue E497. R504 is a binding site for L-aspartate. Residue 549–552 (GVDR) participates in ATP binding.

Belongs to the class-II aminoacyl-tRNA synthetase family. Type 1 subfamily. As to quaternary structure, homodimer.

The protein resides in the cytoplasm. It carries out the reaction tRNA(Asx) + L-aspartate + ATP = L-aspartyl-tRNA(Asx) + AMP + diphosphate. Aspartyl-tRNA synthetase with relaxed tRNA specificity since it is able to aspartylate not only its cognate tRNA(Asp) but also tRNA(Asn). Reaction proceeds in two steps: L-aspartate is first activated by ATP to form Asp-AMP and then transferred to the acceptor end of tRNA(Asp/Asn). This Wolbachia sp. subsp. Drosophila simulans (strain wRi) protein is Aspartate--tRNA(Asp/Asn) ligase.